We begin with the raw amino-acid sequence, 41 residues long: Photosystem II reaction center protein X (41 aa).

Topologically, residues 2–6 (TITPS) are lumenal. Residues 7–29 (LKGFFIGLLSGAVVLGLTFAVLI) traverse the membrane as a helical segment. Over 30–41 (AISQIDKVQRSL) the chain is Cytoplasmic.

The protein belongs to the PsbX family. Type 1 subfamily. In terms of assembly, PSII is composed of 1 copy each of membrane proteins PsbA, PsbB, PsbC, PsbD, PsbE, PsbF, PsbH, PsbI, PsbJ, PsbK, PsbL, PsbM, PsbT, PsbX, PsbY, PsbZ, Psb30/Ycf12, peripheral proteins PsbO, CyanoQ (PsbQ), PsbU, PsbV and a large number of cofactors. It forms dimeric complexes. Part of a photosystem II (PSII) assembly intermediate complex PSII-I; crystallized from a strain deleted of psbJ, it forms monomeric PSII before addition of the oxygen evolving complex. PSII-I includes 3 assembly factors not found in mature PSII (Psb27, Psb28 and Psb34). PSII binds multiple chlorophylls, carotenoids and specific lipids. serves as cofactor.

The protein localises to the cellular thylakoid membrane. In terms of biological role, involved in the binding and/or turnover of quinones at the Q(B) site of photosystem II (PSII). PSII is a light-driven water plastoquinone oxidoreductase, using light energy to abstract electrons from H(2)O, generating a proton gradient subsequently used for ATP formation. The sequence is that of Photosystem II reaction center protein X from Thermosynechococcus vestitus (strain NIES-2133 / IAM M-273 / BP-1).